The sequence spans 172 residues: NADH-quinone oxidoreductase subunit B (172 aa).

Positions 46, 47, 111, and 141 each coordinate [4Fe-4S] cluster.

The protein belongs to the complex I 20 kDa subunit family. As to quaternary structure, NDH-1 is composed of 14 different subunits. Subunits NuoB, C, D, E, F, and G constitute the peripheral sector of the complex. [4Fe-4S] cluster serves as cofactor.

It is found in the cell membrane. It catalyses the reaction a quinone + NADH + 5 H(+)(in) = a quinol + NAD(+) + 4 H(+)(out). NDH-1 shuttles electrons from NADH, via FMN and iron-sulfur (Fe-S) centers, to quinones in the respiratory chain. The immediate electron acceptor for the enzyme in this species is believed to be a menaquinone. Couples the redox reaction to proton translocation (for every two electrons transferred, four hydrogen ions are translocated across the cytoplasmic membrane), and thus conserves the redox energy in a proton gradient. The polypeptide is NADH-quinone oxidoreductase subunit B (Brevibacillus brevis (strain 47 / JCM 6285 / NBRC 100599)).